Here is a 452-residue protein sequence, read N- to C-terminus: Ribulose bisphosphate carboxylase large chain (452 aa).

Positions 1 to 2 (MS) are excised as a propeptide. The residue at position 3 (proline 3) is an N-acetylproline. Lysine 14 carries the N6,N6,N6-trimethyllysine modification. Substrate is bound by residues asparagine 123 and threonine 173. Lysine 175 (proton acceptor) is an active-site residue. Lysine 177 provides a ligand contact to substrate. 3 residues coordinate Mg(2+): lysine 201, aspartate 203, and glutamate 204. N6-carboxylysine is present on lysine 201. Residue histidine 294 is the Proton acceptor of the active site. Substrate is bound by residues arginine 295, residue 327, and serine 379.

It belongs to the RuBisCO large chain family. Type I subfamily. As to quaternary structure, heterohexadecamer of 8 large chains and 8 small chains; disulfide-linked. The disulfide link is formed within the large subunit homodimers. It depends on Mg(2+) as a cofactor. Post-translationally, the disulfide bond which can form in the large chain dimeric partners within the hexadecamer appears to be associated with oxidative stress and protein turnover.

Its subcellular location is the plastid. The protein resides in the chloroplast. It carries out the reaction 2 (2R)-3-phosphoglycerate + 2 H(+) = D-ribulose 1,5-bisphosphate + CO2 + H2O. It catalyses the reaction D-ribulose 1,5-bisphosphate + O2 = 2-phosphoglycolate + (2R)-3-phosphoglycerate + 2 H(+). In terms of biological role, ruBisCO catalyzes two reactions: the carboxylation of D-ribulose 1,5-bisphosphate, the primary event in carbon dioxide fixation, as well as the oxidative fragmentation of the pentose substrate in the photorespiration process. Both reactions occur simultaneously and in competition at the same active site. The chain is Ribulose bisphosphate carboxylase large chain from Salvadora persica (Toothbrush tree).